Consider the following 265-residue polypeptide: GTP cyclohydrolase FolE2 (265 aa).

Belongs to the GTP cyclohydrolase IV family.

The enzyme catalyses GTP + H2O = 7,8-dihydroneopterin 3'-triphosphate + formate + H(+). It participates in cofactor biosynthesis; 7,8-dihydroneopterin triphosphate biosynthesis; 7,8-dihydroneopterin triphosphate from GTP: step 1/1. Its function is as follows. Converts GTP to 7,8-dihydroneopterin triphosphate. This chain is GTP cyclohydrolase FolE2, found in Magnetococcus marinus (strain ATCC BAA-1437 / JCM 17883 / MC-1).